The primary structure comprises 177 residues: Eggshell protein (177 aa).

A signal peptide spans 1–18 (MKQSLTLVFLVAIGYATA). A run of 5 repeats spans residues 25-41 (YSGGYGGGCYGSDCDSG), 42-59 (YGDSGYGGGCTGGDCGGG), 60-75 (YGGGYGGGCSGGDCGN), 76-91 (YGGGYGGDCNGGDCGN), and 92-112 (YGGGYGGGNGGGCSGGNCGGG). A 5 X approximate tandem repeats region spans residues 25-112 (YSGGYGGGCY…GCSGGNCGGG (88 aa)). The segment covering 149-166 (GSGKGKGGGKGGKGGKGG) has biased composition (gly residues). Positions 149 to 177 (GSGKGKGGGKGGKGGKGGTYKPSHYGGGY) are disordered.

The polypeptide is Eggshell protein (Schistosoma mansoni (Blood fluke)).